The primary structure comprises 283 residues: uncharacterized protein (283 aa).

A run of 4 helical transmembrane segments spans residues 11–31 (LFAY…YVSA), 35–55 (EGAL…WFGP), 56–76 (IYAL…MMFF), and 93–113 (LVVW…IHDI). The 122-residue stretch at 162 to 283 (NSFVFLLLHM…LENEMMMNEL (122 aa)) folds into the GGDEF domain.

The protein localises to the cell membrane. This is an uncharacterized protein from Bacillus subtilis (strain 168).